A 726-amino-acid chain; its full sequence is Cyclin-T1 (726 aa).

Phosphoserine is present on Ser-117. Residues Lys-253–Asp-270 carry the Nuclear localization signal, and interaction with Tat-TAR RNA motif. The residue at position 340 (Ser-340) is a Phosphoserine. Lys-342 is covalently cross-linked (Glycyl lysine isopeptide (Lys-Gly) (interchain with G-Cter in SUMO2)). A disordered region spans residues Val-360–Ala-385. The segment covering Gln-366–Val-382 has biased composition (polar residues). Positions Ser-384–Leu-425 form a coiled coil. Ser-388 is subject to Phosphoserine. An N6-acetyllysine modification is found at Lys-390. A Glycyl lysine isopeptide (Lys-Gly) (interchain with G-Cter in SUMO2) cross-link involves residue Lys-415. Ser-416, Ser-474, and Ser-475 each carry ADP-ribosylserine. The tract at residues Ile-480–Gln-550 is histidine-rich domain (HRD). A Glycyl lysine isopeptide (Lys-Gly) (interchain with G-Cter in SUMO2) cross-link involves residue Lys-481. An N6-(ADP-ribosyl)lysine modification is found at Lys-485. The residue at position 487 (His-487) is an ADP-ribosylhistidine. Residues His-487 to His-506 show a composition bias toward basic and acidic residues. Disordered regions lie at residues His-487 to Asn-650 and Ser-688 to Lys-726. 2 positions are modified to phosphoserine: Ser-495 and Ser-499. Basic residues predominate over residues Lys-507 to His-530. The segment at Lys-527 to Ser-570 is required for interaction with ZMYND8. His-530 is subject to ADP-ribosylhistidine. An ADP-ribosylserine mark is found at Ser-531, Ser-549, and Ser-552. ADP-ribosylhistidine is present on His-556. The segment covering Ser-560–Ser-570 has biased composition (low complexity). At Ser-563 the chain carries ADP-ribosylserine. Ser-564 and Ser-577 each carry phosphoserine. Over residues Ser-594–Thr-609 the composition is skewed to low complexity. Polar residues predominate over residues Gly-615–Cys-630. Ser-637 carries the post-translational modification ADP-ribosylserine. Residues Pro-710–Lys-726 are compositionally biased toward pro residues.

Belongs to the cyclin family. Cyclin C subfamily. Cyclin-T1 is the predominant cyclin that associates with CDK9 to form a heterodimer called P-TEFb. P-TEFb forms a complex with AFF4/AF5Q31. Component of a complex which is at least composed of HTATSF1/Tat-SF1, P-TEFb complex, RNA pol II, SUPT5H, and NCL/nucleolin. Component of the 7SK snRNP complex at least composed of P-TEFb (composed of CDK9 and CCNT1/cyclin-T1), HEXIM1, HEXIM2, BCDIN3, SART3 proteins and 7SK and U6 snRNAs. Interacts (via central region) with ZMYND8 (via N-terminus); the interaction is direct and the association appears to occur between homodimeric ZMYND8 and the activated form of the P-TEFb complex. Interacts with BRD4, targets chromatin binding. Interacts with JMJD6. Interacts with MDFIC. Interacts with HSF1. Interacts with HTATSF1. Interacts with TBX21. As to quaternary structure, (Microbial infection) Interacts with the transactivation region of HIV-1, HIV-2 and SIV Tat. In terms of assembly, (Microbial infection) Interacts with human herpes virus 1 (HHV-1) transcriptional regulator ICP22. Post-translationally, ADP-ribosylation on serine residues by PARP1 in response to DNA damage disrupts the phase separation activity of CCNT1, thereby preventing activation of CDK9. Ubiquitously expressed.

The protein localises to the nucleus. In terms of biological role, regulatory subunit of the cyclin-dependent kinase pair (CDK9/cyclin-T1) complex, also called positive transcription elongation factor B (P-TEFb), which facilitates the transition from abortive to productive elongation by phosphorylating the CTD (C-terminal domain) of the large subunit of RNA polymerase II (RNA Pol II). Required to activate the protein kinase activity of CDK9: acts by mediating formation of liquid-liquid phase separation (LLPS) that enhances binding of P-TEFb to the CTD of RNA Pol II. (Microbial infection) In case of HIV or SIV infections, binds to the transactivation domain of the viral nuclear transcriptional activator, Tat, thereby increasing Tat's affinity for the transactivating response RNA element (TAR RNA). Serves as an essential cofactor for Tat, by promoting RNA Pol II activation, allowing transcription of viral genes. This chain is Cyclin-T1 (CCNT1), found in Homo sapiens (Human).